A 508-amino-acid chain; its full sequence is Anthranilate synthase component 1 (508 aa).

Residues S49 and 282-284 (PYM) contribute to the L-tryptophan site. 317–318 (GT) is a binding site for chorismate. E344 serves as a coordination point for Mg(2+). Chorismate contacts are provided by residues Y432, R452, 466–468 (GAG), and G468. A Mg(2+)-binding site is contributed by E481.

Belongs to the anthranilate synthase component I family. Heterotetramer consisting of two non-identical subunits: a beta subunit (TrpG) and a large alpha subunit (TrpE). Mg(2+) is required as a cofactor.

The catalysed reaction is chorismate + L-glutamine = anthranilate + pyruvate + L-glutamate + H(+). It participates in amino-acid biosynthesis; L-tryptophan biosynthesis; L-tryptophan from chorismate: step 1/5. With respect to regulation, feedback inhibited by tryptophan. Functionally, part of a heterotetrameric complex that catalyzes the two-step biosynthesis of anthranilate, an intermediate in the biosynthesis of L-tryptophan. In the first step, the glutamine-binding beta subunit (TrpG) of anthranilate synthase (AS) provides the glutamine amidotransferase activity which generates ammonia as a substrate that, along with chorismate, is used in the second step, catalyzed by the large alpha subunit of AS (TrpE) to produce anthranilate. In the absence of TrpG, TrpE can synthesize anthranilate directly from chorismate and high concentrations of ammonia. The sequence is that of Anthranilate synthase component 1 (trpE) from Geobacillus stearothermophilus (Bacillus stearothermophilus).